Here is a 352-residue protein sequence, read N- to C-terminus: Cuticle collagen dpy-17 (352 aa).

The signal sequence occupies residues 1-29 (MSVFAGYAACTLGAVSMLLCVSLVPQVYQ). The furin-like endopeptidase recognition region stretch occupies residues 61 to 64 (RVRR). Disordered stretches follow at residues 73–143 (GGYG…GPGD) and 156–352 (GPAG…GYRN). Residues 87-97 (GPHGGFPGGPQ) show a composition bias toward gly residues. 4 triple-helical region regions span residues 156–182 (GPAGPKGTPGHDGPDGIPGVPGVDGED), 202–264 (GPQG…DVEH), 267–290 (GLPGAKGTPGAPGESGDQGEQGDR), and 294–329 (GIAGPPGERGPQGEKGDDGPNGAAGSPGEEGEPGQD). Positions 202-259 (GPQGPPGSQGKPGARGMRGARGQAAMPGRDGSPGMPGSLGPIGPPGAAGEEGPTGEPG) constitute a Collagen-like domain. Over residues 207–259 (PGSQGKPGARGMRGARGQAAMPGRDGSPGMPGSLGPIGPPGAAGEEGPTGEPG) the composition is skewed to low complexity. Over residues 337 to 352 (QRNTNAAVSGNQGYRN) the composition is skewed to polar residues.

The protein belongs to the cuticular collagen family. In terms of assembly, collagen polypeptide chains are complexed within the cuticle by disulfide bonds and other types of covalent cross-links.

The protein resides in the secreted. It localises to the extracellular space. Its function is as follows. Secreted collagen that forms part of the nematode cuticle, which functions as an exoskeleton and a barrier to protect the worm from its environment. Secretion and subsequent incorporation into the cuticle is likely mediated by bli-4, which probably cleaves at the N-terminal consensus furin cleavage site. This Caenorhabditis elegans protein is Cuticle collagen dpy-17.